The sequence spans 348 residues: CCAAT/enhancer-binding protein beta (348 aa).

The interval 1 to 24 (MQRLVVWDPVCLPLPPPPPAFKSM) is required for Lys-174 sumoylation. An Asymmetric dimethylarginine; by CARM1 modification is found at arginine 3. Residues 24–135 (MEVANFYYEA…YGGKNCKKAA (112 aa)) are required for MYC transcriptional repression. Lysine 43 bears the N6-acetyllysine; alternate mark. Lysine 43 carries the N6-methylated lysine; alternate modification. Disordered regions lie at residues 44–65 (AAPA…ELGS) and 79–112 (LEPL…ASSG). Residues 47-59 (AAPPADRPGPRPP) are compositionally biased toward pro residues. The short motif at 116-124 (DFLSDLFSD) is the 9aaTAD element. Residues lysine 129 and lysine 132 each carry the N6-acetyllysine; by KAT2A and KAT2B modification. At lysine 133 the chain carries N6-acetyllysine; by KAT2A and KAT2B; alternate. Lysine 133 is covalently cross-linked (Glycyl lysine isopeptide (Lys-Gly) (interchain with G-Cter in SUMO2); alternate). Positions 158–178 (APLHPPPPPPPPPAELKAEPG) are disordered. Over residues 160-171 (LHPPPPPPPPPA) the composition is skewed to pro residues. Lysine 174 participates in a covalent cross-link: Glycyl lysine isopeptide (Lys-Gly) (interchain with G-Cter in SUMO2); alternate. A Glycyl lysine isopeptide (Lys-Gly) (interchain with G-Cter in SUMO); alternate cross-link involves residue lysine 174. Glycyl lysine isopeptide (Lys-Gly) (interchain with G-Cter in SUMO2) cross-links involve residues lysine 185 and lysine 187. The segment covering 219 to 259 (SGSSGSLSTSSSSSPPGTPSPADAKATPAAAACYAGAAPAP) has biased composition (low complexity). The disordered stretch occupies residues 219 to 277 (SGSSGSLSTSSSSSPPGTPSPADAKATPAAAACYAGAAPAPSQVKSKAKKTVDKHSDEY). Position 227 is a phosphothreonine; by GSK3-beta (threonine 227). O-linked (GlcNAc) serine glycosylation is found at serine 228 and serine 229. Phosphoserine; by GSK3-beta is present on serine 232. Threonine 236 is modified (phosphothreonine; by RPS6KA1, CDK2 and MAPK). Residues lysine 263 and lysine 265 each participate in a glycyl lysine isopeptide (Lys-Gly) (interchain with G-Cter in SUMO2) cross-link. Over residues 268–277 (KTVDKHSDEY) the composition is skewed to basic and acidic residues. Threonine 269 carries the phosphothreonine; by RPS6KA1 and PKC/PRKCA modification. In terms of domain architecture, bZIP spans 274–337 (SDEYKIRRER…STLRNLFKTL (64 aa)). The segment at 278–298 (KIRRERNNIAVRKSRDKAKMR) is basic motif. Residue serine 291 is modified to Phosphoserine; by PKC/PRKCA. The interval 300–307 (LETQHKVL) is leucine-zipper. The residue at position 328 (serine 328) is a Phosphoserine; by CaMK2. Lysine 335 is covalently cross-linked (Glycyl lysine isopeptide (Lys-Gly) (interchain with G-Cter in SUMO2)).

This sequence belongs to the bZIP family. C/EBP subfamily. As to quaternary structure, binds DNA as a homodimer and as a heterodimer. Interacts with ATF4. Binds DNA as a heterodimer with ATF4. Interacts with MYB; within the complex, MYB and CEBPB bind to different promoter regions. Can form stable heterodimers with CEBPA, CEBPD and CEBPG. Interacts with SIX1. Interacts with TRIM28 and PTGES2. Interacts with PRDM16. Interacts with CCDC85B. Forms a complex with THOC5. Interacts with ZNF638; this interaction increases transcriptional activation. Interacts with CIDEA and CIDEC; these interactions increase transcriptional activation of a subset of CEBPB downstream target genes. Interacts with DDIT3/CHOP. Interacts with EP300; recruits EP300 to chromatin. Interacts with RORA; the interaction disrupts interaction with EP300. Interacts (not methylated) with MED23, MED26, SMARCA2, SMARCB1 and SMARCC1. Interacts with KAT2A and KAT2B. Interacts with ATF5; EP300 is required for ATF5 and CEBPB interaction and DNA binding. Interacts with NFE2L1; the heterodimer represses expression of DSPP during odontoblast differentiation. Post-translationally, methylated. Methylation at Arg-3 by CARM1 and at Lys-43 by EHMT2 inhibit transactivation activity. Methylation is probably inhibited by phosphorylation at Thr-236. Sumoylated by polymeric chains of SUMO2 or SUMO3. Sumoylation at Lys-174 is required for inhibition of T-cells proliferation. In adipocytes, sumoylation at Lys-174 by PIAS1 leads to ubiquitination and subsequent proteasomal degradation. Desumoylated by SENP2, which abolishes ubiquitination and stabilizes protein levels. In terms of processing, ubiquitinated, leading to proteasomal degradation. Post-translationally, phosphorylated at Thr-236 by MAPK and CDK2, serves to prime phosphorylation at Thr-227 and Ser-232 by GSK3B and acquire DNA-binding as well as transactivation activities, required to induce adipogenesis. MAPK and CDK2 act sequentially to maintain Thr-236 in the primed phosphorylated state during mitotical cloning expansion and thereby progression of terminal differentiation. Phosphorylation at Thr-269 enhances transactivation activity. Phosphorylation at Ser-328 in response to calcium increases transactivation activity. Phosphorylated at Thr-236 by RPS6KA1. O-glycosylated, glycosylation at Ser-228 and Ser-229 prevents phosphorylation on Thr-236, Ser-232 and Thr-227 and DNA binding activity which delays the adipocyte differentiation program. In terms of processing, acetylated. Acetylation at Lys-43 is an important and dynamic regulatory event that contributes to its ability to transactivate target genes, including those associated with adipogenesis and adipocyte function. Deacetylation by HDAC1 represses its transactivation activity. Acetylated by KAT2A and KAT2B within a cluster of lysine residues between amino acids 129-133, this acetylation is strongly induced by glucocorticoid treatment and enhances transactivation activity.

The protein localises to the nucleus. It localises to the cytoplasm. In terms of biological role, important transcription factor regulating the expression of genes involved in immune and inflammatory responses. Also plays a significant role in adipogenesis, as well as in the gluconeogenic pathway, liver regeneration, and hematopoiesis. The consensus recognition site is 5'-T[TG]NNGNAA[TG]-3'. Its functional capacity is governed by protein interactions and post-translational protein modifications. During early embryogenesis, plays essential and redundant roles with CEBPA. Has a promitotic effect on many cell types such as hepatocytes and adipocytes but has an antiproliferative effect on T-cells by repressing MYC expression, facilitating differentiation along the T-helper 2 lineage. Binds to regulatory regions of several acute-phase and cytokines genes and plays a role in the regulation of acute-phase reaction and inflammation. Also plays a role in intracellular bacteria killing. During adipogenesis, is rapidly expressed and, after activation by phosphorylation, induces CEBPA and PPARG, which turn on the series of adipocyte genes that give rise to the adipocyte phenotype. The delayed transactivation of the CEBPA and PPARG genes by CEBPB appears necessary to allow mitotic clonal expansion and thereby progression of terminal differentiation. Essential for female reproduction because of a critical role in ovarian follicle development. Restricts osteoclastogenesis: together with NFE2L1; represses expression of DSPP during odontoblast differentiation. This is CCAAT/enhancer-binding protein beta (CEBPB) from Bos taurus (Bovine).